The sequence spans 375 residues: Succinyl-diaminopimelate desuccinylase (375 aa).

H66 is a Zn(2+) binding site. D68 is a catalytic residue. D99 is a Zn(2+) binding site. E133 (proton acceptor) is an active-site residue. Zn(2+)-binding residues include E134, E162, and H348.

The protein belongs to the peptidase M20A family. DapE subfamily. Homodimer. Zn(2+) serves as cofactor. Requires Co(2+) as cofactor.

It catalyses the reaction N-succinyl-(2S,6S)-2,6-diaminopimelate + H2O = (2S,6S)-2,6-diaminopimelate + succinate. It participates in amino-acid biosynthesis; L-lysine biosynthesis via DAP pathway; LL-2,6-diaminopimelate from (S)-tetrahydrodipicolinate (succinylase route): step 3/3. In terms of biological role, catalyzes the hydrolysis of N-succinyl-L,L-diaminopimelic acid (SDAP), forming succinate and LL-2,6-diaminopimelate (DAP), an intermediate involved in the bacterial biosynthesis of lysine and meso-diaminopimelic acid, an essential component of bacterial cell walls. The polypeptide is Succinyl-diaminopimelate desuccinylase (Aeromonas hydrophila subsp. hydrophila (strain ATCC 7966 / DSM 30187 / BCRC 13018 / CCUG 14551 / JCM 1027 / KCTC 2358 / NCIMB 9240 / NCTC 8049)).